Consider the following 428-residue polypeptide: C4-dicarboxylate transport protein (428 aa).

A run of 9 helical transmembrane segments spans residues 8-28 (SLYFQVLTAIAIGILLGHFYP), 44-64 (LIKMIIAPVIFCTVVTGIAGM), 76-96 (VALLYFEIVSTIALIIGLVIV), 142-162 (IGAFASGNILQVLLFAVLFGF), 184-204 (VIFGIINMIMRLAPIGAFGAM), 222-242 (LIVCFYITCILFVVVVLGSIA), 289-309 (VVGLVIPTGYSFNLDGTSIYL), 326-346 (IFHQITLLVVLLLSSKGAAGV), and 352-372 (IVLAATISAVGHLPVAGLALI).

This sequence belongs to the dicarboxylate/amino acid:cation symporter (DAACS) (TC 2.A.23) family.

The protein resides in the cell inner membrane. Functionally, responsible for the transport of dicarboxylates such as succinate, fumarate, and malate from the periplasm across the membrane. The polypeptide is C4-dicarboxylate transport protein (Cronobacter sakazakii (strain ATCC BAA-894) (Enterobacter sakazakii)).